The chain runs to 551 residues: E3 ubiquitin-protein ligase HEL1 (551 aa).

Residues 175 to 388 (NDFTCIICCD…KNFFQCTMYK (214 aa)) form a TRIAD supradomain region. Residues Cys-179, Cys-182, Cys-200, Cys-203, Cys-301, Cys-304, His-309, Cys-314, Cys-341, and Cys-344 each coordinate Zn(2+). An RING-type 1 zinc finger spans residues 179–225 (CIICCDKKDTETFALECGHEYCINCYRHYIKDKLHEGNIITCMDCSL). An IBR-type zinc finger spans residues 242–314 (SKLMDSSIKS…GFEVHSPADC (73 aa)). Residues 341 to 370 (CPKCSVNIEKNGGCNHMVCSSCKYEFCWIC) form an RING-type 2; atypical zinc finger. The active site involves Cys-354. The Zn(2+) site is built by Cys-359, Cys-362, Cys-367, Cys-370, His-377, and Cys-384.

It belongs to the RBR family. Interacts with the E2 ubiquitin-conjugating enzyme UBC4 and histones H3 and H4.

The enzyme catalyses [E2 ubiquitin-conjugating enzyme]-S-ubiquitinyl-L-cysteine + [acceptor protein]-L-lysine = [E2 ubiquitin-conjugating enzyme]-L-cysteine + [acceptor protein]-N(6)-ubiquitinyl-L-lysine.. Its pathway is protein modification; protein ubiquitination. Probable ubiquitin-protein ligase involved in the degradation-related ubiquitination of histones. Contributes to the post-translational regulation of histone protein levels by polyubiquitination of excess histones for subsequent degradation. The polypeptide is E3 ubiquitin-protein ligase HEL1 (Saccharomyces cerevisiae (strain ATCC 204508 / S288c) (Baker's yeast)).